Reading from the N-terminus, the 63-residue chain is 2-hydroxymuconate tautomerase (63 aa).

P2 acts as the Proton acceptor; via imino nitrogen in catalysis.

The protein belongs to the 4-oxalocrotonate tautomerase family. Homohexamer.

The catalysed reaction is (2Z,4E)-2-hydroxyhexa-2,4-dienedioate = (3E)-2-oxohex-3-enedioate. Its pathway is xenobiotic degradation; toluene degradation. Functionally, catalyzes the ketonization of 2-hydroxymuconate stereoselectively to yield 2-oxo-3-hexenedioate. In Pseudomonas sp. (strain CF600), this protein is 2-hydroxymuconate tautomerase (dmpI).